Reading from the N-terminus, the 130-residue chain is Small ribosomal subunit protein uS9 (130 aa).

Belongs to the universal ribosomal protein uS9 family.

The protein is Small ribosomal subunit protein uS9 of Marinobacter nauticus (strain ATCC 700491 / DSM 11845 / VT8) (Marinobacter aquaeolei).